Here is a 70-residue protein sequence, read N- to C-terminus: MPREIKDIKDFLLKARRKDAKSVKIKKNQQNVKFKVRCSRFLYTLVITDKEKAEKLKQSLPPGLQVKEVK.

It belongs to the eukaryotic ribosomal protein eL38 family.

The chain is Large ribosomal subunit protein eL38 (RpL38) from Spodoptera frugiperda (Fall armyworm).